The following is a 475-amino-acid chain: Ribulose bisphosphate carboxylase large chain (475 aa).

Positions 1–2 are excised as a propeptide; the sequence is MS. An N-acetylproline modification is found at Pro3. Lys14 is subject to N6,N6,N6-trimethyllysine. Positions 123 and 173 each coordinate substrate. Lys175 acts as the Proton acceptor in catalysis. Lys177 serves as a coordination point for substrate. Mg(2+) is bound by residues Lys201, Asp203, and Glu204. Lys201 bears the N6-carboxylysine mark. Catalysis depends on His294, which acts as the Proton acceptor. Substrate is bound by residues Arg295, His327, and Ser379.

Belongs to the RuBisCO large chain family. Type I subfamily. As to quaternary structure, heterohexadecamer of 8 large chains and 8 small chains; disulfide-linked. The disulfide link is formed within the large subunit homodimers. The cofactor is Mg(2+). In terms of processing, the disulfide bond which can form in the large chain dimeric partners within the hexadecamer appears to be associated with oxidative stress and protein turnover.

Its subcellular location is the plastid. It localises to the chloroplast. It carries out the reaction 2 (2R)-3-phosphoglycerate + 2 H(+) = D-ribulose 1,5-bisphosphate + CO2 + H2O. It catalyses the reaction D-ribulose 1,5-bisphosphate + O2 = 2-phosphoglycolate + (2R)-3-phosphoglycerate + 2 H(+). Its function is as follows. RuBisCO catalyzes two reactions: the carboxylation of D-ribulose 1,5-bisphosphate, the primary event in carbon dioxide fixation, as well as the oxidative fragmentation of the pentose substrate in the photorespiration process. Both reactions occur simultaneously and in competition at the same active site. This chain is Ribulose bisphosphate carboxylase large chain, found in Pinus radiata (Monterey pine).